Here is a 144-residue protein sequence, read N- to C-terminus: Large ribosomal subunit protein uL13 (144 aa).

The protein belongs to the universal ribosomal protein uL13 family. As to quaternary structure, part of the 50S ribosomal subunit.

Functionally, this protein is one of the early assembly proteins of the 50S ribosomal subunit, although it is not seen to bind rRNA by itself. It is important during the early stages of 50S assembly. This chain is Large ribosomal subunit protein uL13, found in Mycoplasmopsis pulmonis (strain UAB CTIP) (Mycoplasma pulmonis).